The primary structure comprises 205 residues: Probable GTP-binding protein EngB (205 aa).

The EngB-type G domain maps to 27–201; the sequence is TGIEIAFAGR…AAKLDFWFSP (175 aa). Residues 35-42, 62-66, 80-83, 147-150, and 180-182 each bind GTP; these read GRSNAGKS, GRTQL, DLPG, TKAD, and FSA. Mg(2+) contacts are provided by S42 and T64.

Belongs to the TRAFAC class TrmE-Era-EngA-EngB-Septin-like GTPase superfamily. EngB GTPase family. It depends on Mg(2+) as a cofactor.

Functionally, necessary for normal cell division and for the maintenance of normal septation. This Haemophilus influenzae (strain 86-028NP) protein is Probable GTP-binding protein EngB.